Here is a 285-residue protein sequence, read N- to C-terminus: MSVTTCQILDGKALAQKIQLGLGERIQTLKSPMGRPPGLAVLMVGDNPASAVYVRNKEKACTKIGMASFGRHFSTDTSELEILAEIVRLNQDERVDGILIQLPLPKHLDAVSLLYQIDPKKDADGLHPLNLGGLVRGEDCIRSCTPAGVMALLKEYNIPIAGKHAVVVGRSILVGKPLALMLLEENATVTIAHSRTENLAEITRSADILVPAVGKANLITKDMVKPGAVVVDVGINRVADRLVGDVDYAGVLEVASYLTPVPGGVGPMTVAMLLKNTLLSYERKL.

NADP(+)-binding positions include 169 to 171, Ser194, and Ile235; that span reads GRS.

Belongs to the tetrahydrofolate dehydrogenase/cyclohydrolase family. Homodimer.

The catalysed reaction is (6R)-5,10-methylene-5,6,7,8-tetrahydrofolate + NADP(+) = (6R)-5,10-methenyltetrahydrofolate + NADPH. It carries out the reaction (6R)-5,10-methenyltetrahydrofolate + H2O = (6R)-10-formyltetrahydrofolate + H(+). It functions in the pathway one-carbon metabolism; tetrahydrofolate interconversion. In terms of biological role, catalyzes the oxidation of 5,10-methylenetetrahydrofolate to 5,10-methenyltetrahydrofolate and then the hydrolysis of 5,10-methenyltetrahydrofolate to 10-formyltetrahydrofolate. This is Bifunctional protein FolD from Microcystis aeruginosa (strain NIES-843 / IAM M-2473).